Here is a 152-residue protein sequence, read N- to C-terminus: Methylglyoxal synthase (152 aa).

The MGS-like domain maps to 5–152 (TRTVQAQKHI…YQLYLQQRLK (148 aa)). Residues His-19, Lys-23, 45–48 (TGTT), and 65–66 (SG) each bind substrate. Asp-71 serves as the catalytic Proton donor/acceptor. Position 98 (His-98) interacts with substrate.

The protein belongs to the methylglyoxal synthase family.

It carries out the reaction dihydroxyacetone phosphate = methylglyoxal + phosphate. In terms of biological role, catalyzes the formation of methylglyoxal from dihydroxyacetone phosphate. The sequence is that of Methylglyoxal synthase from Erwinia tasmaniensis (strain DSM 17950 / CFBP 7177 / CIP 109463 / NCPPB 4357 / Et1/99).